Consider the following 126-residue polypeptide: Fluoride-specific ion channel FluC (126 aa).

The next 3 membrane-spanning stretches (helical) occupy residues 33–53, 64–84, and 96–116; these read LPLN…VFIV, YSLF…SFAL, and GALA…LIGG. The Na(+) site is built by Gly74 and Thr77.

The protein belongs to the fluoride channel Fluc/FEX (TC 1.A.43) family.

Its subcellular location is the cell membrane. It carries out the reaction fluoride(in) = fluoride(out). Na(+) is not transported, but it plays an essential structural role and its presence is essential for fluoride channel function. Functionally, fluoride-specific ion channel. Important for reducing fluoride concentration in the cell, thus reducing its toxicity. This Nitrosopumilus maritimus (strain SCM1) protein is Fluoride-specific ion channel FluC.